We begin with the raw amino-acid sequence, 555 residues long: 5'-nucleotidase-related protein (555 aa).

An N-terminal signal peptide occupies residues 1–25; the sequence is MKSLIGTLGLYCLFILTNNVVSSYG. 3 residues coordinate a divalent metal cation: D38, H40, and D91. An N-linked (GlcNAc...) asparagine glycan is attached at N105. N123 serves as a coordination point for a divalent metal cation. A glycan (N-linked (GlcNAc...) asparagine) is linked at N198. Residues H225 and H249 each contribute to the a divalent metal cation site. N295 is a glycosylation site (N-linked (GlcNAc...) asparagine). The AMP site is built by R358, R402, and F421. A glycan (N-linked (GlcNAc...) asparagine) is linked at N465. The AMP site is built by F505 and D511.

The protein belongs to the 5'-nucleotidase family. Requires Mg(2+) as cofactor. The cofactor is Mn(2+). As to expression, salivary gland (at protein level). Saliva (at protein level).

The protein resides in the secreted. It catalyses the reaction a ribonucleoside 5'-triphosphate + 2 H2O = a ribonucleoside 5'-phosphate + 2 phosphate + 2 H(+). Its activity is regulated as follows. DEPC (2 mM), sodium fluoride (10 mM) and 4,4'-Diisothiocyano-2,2'-stilbenedisulfonic acid (DIDS, 100 uM) nearly completely abrogate activity. Concanavalin A enhances activity. In terms of biological role, facilitates hematophagy by inhibiting ADP-dependent platelet aggregation and promoting disaggregation of ADP-stimulated platelets in the host. Cleaves adenosine triphosphate (ATP) and adenosine diphosphate (ADP) to adenosine monophosphate (AMP) and inorganic phosphate. Interacts with fibrinogen receptor integrin alpha-IIb/beta-3 (ITGA2B/ITGB3). The polypeptide is 5'-nucleotidase-related protein (Glossina morsitans morsitans (Savannah tsetse fly)).